A 445-amino-acid polypeptide reads, in one-letter code: RNA-binding protein asd-2 (445 aa).

The tract at residues 22 to 63 (TVIPPPPNDSGHEFIGPSSGPPQVTITPSGVQSGSANGVSTS) is disordered. Residues 42–63 (PPQVTITPSGVQSGSANGVSTS) are compositionally biased toward polar residues. Residues 71-128 (EYLSQLLKDKKQLAAFPNVFHHLERLADEEINKVRVVLFQCEFSKESAPLPDAEGDST) form a qua1 domain region. The region spanning 145–171 (NFVGRILGPRGMTAKQLEQETGCKIMV) is the KH domain. The qua2 domain; involved in RNA binding stretch occupies residues 230-253 (APEGEDDLKRKQLMELAIINGTYR).

In terms of assembly, interacts with sup-12; in the presence of RNA, but with weak affinity in the absence of RNA. As to expression, isoform b: Expressed in the hypodermis and pharyngeal muscles. Isoform c: Expressed in body wall muscles and phayngeal muscles.

The protein resides in the nucleus. Its function is as follows. RNA-binding protein that binds to the 5'-NACUAAY-N(1,20)-UAAY-3' consensus sequence in pre-mRNA introns to promote alternative splicing. Required for mutually exclusive alternative splicing where it modulates the switch between mutually exclusive exons during pre-mRNA maturation. Involved in muscle-specific gene expression regulating the alternative splicing of genes such as let-2 and unc-60 to ensure that their respective isoforms are expressed in muscle. Promotes the removal of intron 10 from let-2 pre-mRNA to allow for the exclusive expression of the muscle-specific let-2 isoform (as opposed to the non-muscle-specific isoform expressed in embryos) in body wall muscles during late larval and adult stages of development. Binds cooperatively with RNA-binding protein sup-12 to intron 1A of the unc-60 pre-mRNA to promote alternative splicing and expression of the muscle specific isoform of unc-60. The chain is RNA-binding protein asd-2 from Caenorhabditis elegans.